Here is a 329-residue protein sequence, read N- to C-terminus: Acetyl-coenzyme A carboxylase carboxyl transferase subunit alpha (329 aa).

Positions 40 to 294 (QLETLAARRR…KESLIRNLRE (255 aa)) constitute a CoA carboxyltransferase C-terminal domain.

This sequence belongs to the AccA family. Acetyl-CoA carboxylase is a heterohexamer composed of biotin carboxyl carrier protein (AccB), biotin carboxylase (AccC) and two subunits each of ACCase subunit alpha (AccA) and ACCase subunit beta (AccD).

It is found in the cytoplasm. It carries out the reaction N(6)-carboxybiotinyl-L-lysyl-[protein] + acetyl-CoA = N(6)-biotinyl-L-lysyl-[protein] + malonyl-CoA. It functions in the pathway lipid metabolism; malonyl-CoA biosynthesis; malonyl-CoA from acetyl-CoA: step 1/1. Component of the acetyl coenzyme A carboxylase (ACC) complex. First, biotin carboxylase catalyzes the carboxylation of biotin on its carrier protein (BCCP) and then the CO(2) group is transferred by the carboxyltransferase to acetyl-CoA to form malonyl-CoA. The polypeptide is Acetyl-coenzyme A carboxylase carboxyl transferase subunit alpha (Prochlorococcus marinus (strain MIT 9211)).